The following is a 392-amino-acid chain: Major outer membrane protein P.IA (392 aa).

An N-terminal signal peptide occupies residues 1-19; sequence MRKKLTALVLSALPLAAVA.

The protein belongs to the Gram-negative porin family. Homotrimer.

The protein resides in the cell outer membrane. Serves as a slightly cation selective porin. Major antigen on the gonococcal cell surface and it may have pathogenic properties in addition to its porin activity. The chain is Major outer membrane protein P.IA (porA) from Neisseria meningitidis serogroup B (strain ATCC BAA-335 / MC58).